Consider the following 313-residue polypeptide: Ribosomal RNA small subunit methyltransferase H (313 aa).

Residues 31–33 (GGH), Asp51, Phe77, Asp95, and Gln102 contribute to the S-adenosyl-L-methionine site.

The protein belongs to the methyltransferase superfamily. RsmH family.

Its subcellular location is the cytoplasm. The enzyme catalyses cytidine(1402) in 16S rRNA + S-adenosyl-L-methionine = N(4)-methylcytidine(1402) in 16S rRNA + S-adenosyl-L-homocysteine + H(+). Its function is as follows. Specifically methylates the N4 position of cytidine in position 1402 (C1402) of 16S rRNA. The polypeptide is Ribosomal RNA small subunit methyltransferase H (Xylella fastidiosa (strain 9a5c)).